Here is a 44-residue protein sequence, read N- to C-terminus: uncharacterized protein (44 aa).

A helical membrane pass occupies residues 19–39 (AVGFVVSFGFFAFLFVMATVI).

It is found in the cell membrane. This is an uncharacterized protein from Bacillus subtilis (strain 168).